The following is a 419-amino-acid chain: Synaptosomal-associated protein 47 (419 aa).

T-SNARE coiled-coil homology domains follow at residues 108-170 (PQGA…LSEL) and 356-418 (VLQP…MRKL).

Belongs to the SVAP1 family.

May play a role in intracellular membrane fusion. The polypeptide is Synaptosomal-associated protein 47 (snap47) (Danio rerio (Zebrafish)).